The following is a 469-amino-acid chain: Neuraminidase (469 aa).

Over 1–6 (MNPNQK) the chain is Intravirion. The chain crosses the membrane as a helical span at residues 7–29 (IITIGSVSLTIATVCSLMQIAIL). The interval 11-33 (GSVSLTIATVCSLMQIAILATTV) is involved in apical transport and lipid raft association. Over 30–469 (ATTVTLHFKQ…DGANINFMPI (440 aa)) the chain is Virion surface. The segment at 36–88 (HFKQHECDSPASNQVMPCEPIIIERNITEIVYLNNTTIEKEICPEVVEYRNWS) is hypervariable stalk region. N-linked (GlcNAc...) asparagine; by host glycans are attached at residues Asn61, Asn69, Asn70, and Asn86. The interval 91–469 (QCQITGFAPF…DGANINFMPI (379 aa)) is head of neuraminidase. Cystine bridges form between Cys92–Cys417, Cys124–Cys129, Cys183–Cys230, Cys232–Cys237, Cys278–Cys291, Cys280–Cys289, Cys318–Cys337, and Cys421–Cys447. Position 118 (Arg118) interacts with substrate. Asn146 carries N-linked (GlcNAc...) asparagine; by host glycosylation. The active-site Proton donor/acceptor is Asp151. Arg152 is a binding site for substrate. Residues Asn200 and Asn234 are each glycosylated (N-linked (GlcNAc...) asparagine; by host). 276–277 (EE) serves as a coordination point for substrate. Arg292 serves as a coordination point for substrate. Residues Asp293, Gly297, and Asp324 each coordinate Ca(2+). The interval 325-349 (TPRNDDSSSNSNCRDPNNERGNPGV) is disordered. Arg371 serves as a coordination point for substrate. N-linked (GlcNAc...) asparagine; by host glycosylation occurs at Asn402. The active-site Nucleophile is Tyr406.

This sequence belongs to the glycosyl hydrolase 34 family. As to quaternary structure, homotetramer. Requires Ca(2+) as cofactor. In terms of processing, N-glycosylated.

It localises to the virion membrane. It is found in the host apical cell membrane. The catalysed reaction is Hydrolysis of alpha-(2-&gt;3)-, alpha-(2-&gt;6)-, alpha-(2-&gt;8)- glycosidic linkages of terminal sialic acid residues in oligosaccharides, glycoproteins, glycolipids, colominic acid and synthetic substrates.. With respect to regulation, inhibited by the neuraminidase inhibitors zanamivir (Relenza) and oseltamivir (Tamiflu). These drugs interfere with the release of progeny virus from infected cells and are effective against all influenza strains. Resistance to neuraminidase inhibitors is quite rare. In terms of biological role, catalyzes the removal of terminal sialic acid residues from viral and cellular glycoconjugates. Cleaves off the terminal sialic acids on the glycosylated HA during virus budding to facilitate virus release. Additionally helps virus spread through the circulation by further removing sialic acids from the cell surface. These cleavages prevent self-aggregation and ensure the efficient spread of the progeny virus from cell to cell. Otherwise, infection would be limited to one round of replication. Described as a receptor-destroying enzyme because it cleaves a terminal sialic acid from the cellular receptors. May facilitate viral invasion of the upper airways by cleaving the sialic acid moieties on the mucin of the airway epithelial cells. Likely to plays a role in the budding process through its association with lipid rafts during intracellular transport. May additionally display a raft-association independent effect on budding. Plays a role in the determination of host range restriction on replication and virulence. Sialidase activity in late endosome/lysosome traffic seems to enhance virus replication. The chain is Neuraminidase from Influenza A virus (strain A/Leningrad/134/17/1957 H2N2).